The sequence spans 270 residues: 4-hydroxy-4-methyl-2-oxoglutarate aldolase tasA (270 aa).

The active-site Proton acceptor is His49. A divalent metal cation is bound by residues Glu156 and Asp182. Asp182 contacts substrate.

This sequence belongs to the HpcH/HpaI aldolase family. In terms of assembly, homohexamer; trimer of dimers. Requires Co(2+) as cofactor. Mn(2+) is required as a cofactor. The cofactor is Zn(2+). It depends on Fe(2+) as a cofactor. Mg(2+) serves as cofactor.

It catalyses the reaction 4-hydroxy-4-methyl-2-oxoglutarate = 2 pyruvate. It functions in the pathway secondary metabolite biosynthesis. Its function is as follows. 4-hydroxy-4-methyl-2-oxoglutarate aldolase; part of the gene cluster that mediates the biosynthesis of the tetramic acids Sch210971 and Sch210972, potential anti-HIV fungal natural product that contain a decalin core. The PKS module of tasS together with the enoylreductase tasC catalyze the formation of the polyketide unit which is then conjugated to 4-hydroxyl-4-methyl glutamate (HMG) by the condensation domain of the tasS NRPS module. One unique structural feature of Sch210971 and Sch210972 is the tetramic acid motif proposed to be derived from the non-proteinogenic amino acid HMG, by a Dieckmann-type condensation catalyzed by the reductase domain of tasS. The aldolase tasA catalyzes the aldol condensation of 2 molecules of pyruvic acid to yield the intermediate 4-hydroxyl-4-methyl-2-oxoglutarate (HMOG), which can then be stereoselectively transaminated, may be by tasG, to form HMG. The Diels-Alderase tas3 then uses the Dieckmann product of tasS as substrate and catalyzes the Diels-Alder cycloaddition to form the decalin ring of Sch210971 and Sch210972. The polypeptide is 4-hydroxy-4-methyl-2-oxoglutarate aldolase tasA (Hapsidospora irregularis).